Reading from the N-terminus, the 380-residue chain is Queuine tRNA-ribosyltransferase (380 aa).

The active-site Proton acceptor is Asp96. Residues Asp96–Phe100, Asp150, Gln193, and Gly220 contribute to the substrate site. The RNA binding stretch occupies residues Gly251–Ser257. The active-site Nucleophile is Asp270. The interval Thr275 to Arg279 is RNA binding; important for wobble base 34 recognition. Zn(2+) contacts are provided by Cys308, Cys310, Cys313, and His339.

It belongs to the queuine tRNA-ribosyltransferase family. In terms of assembly, homodimer. Within each dimer, one monomer is responsible for RNA recognition and catalysis, while the other monomer binds to the replacement base PreQ1. It depends on Zn(2+) as a cofactor.

It carries out the reaction 7-aminomethyl-7-carbaguanine + guanosine(34) in tRNA = 7-aminomethyl-7-carbaguanosine(34) in tRNA + guanine. It functions in the pathway tRNA modification; tRNA-queuosine biosynthesis. In terms of biological role, catalyzes the base-exchange of a guanine (G) residue with the queuine precursor 7-aminomethyl-7-deazaguanine (PreQ1) at position 34 (anticodon wobble position) in tRNAs with GU(N) anticodons (tRNA-Asp, -Asn, -His and -Tyr). Catalysis occurs through a double-displacement mechanism. The nucleophile active site attacks the C1' of nucleotide 34 to detach the guanine base from the RNA, forming a covalent enzyme-RNA intermediate. The proton acceptor active site deprotonates the incoming PreQ1, allowing a nucleophilic attack on the C1' of the ribose to form the product. After dissociation, two additional enzymatic reactions on the tRNA convert PreQ1 to queuine (Q), resulting in the hypermodified nucleoside queuosine (7-(((4,5-cis-dihydroxy-2-cyclopenten-1-yl)amino)methyl)-7-deazaguanosine). The chain is Queuine tRNA-ribosyltransferase from Streptococcus pneumoniae (strain Taiwan19F-14).